We begin with the raw amino-acid sequence, 1197 residues long: Sensor protein EvgS (1197 aa).

The first 21 residues, 1-21 (MKFLPYIFLLCCGLWSTISFA), serve as a signal peptide directing secretion. The Cytoplasmic portion of the chain corresponds to 22–325 (DEDYIEYRGI…SMTDENGSVR (304 aa)). A helical membrane pass occupies residues 326-346 (GVMGDILNIITLQTGLNFSPI). The Periplasmic segment spans residues 347–537 (TVSHNIHAGT…TWDLYSEQFY (191 aa)). A helical transmembrane segment spans residues 538–558 (IVTTLSVLLVGSSLLWGFYLL). Residues 559–1197 (RSVRRRKVIQ…EIAVFCQKND (639 aa)) lie on the Cytoplasmic side of the membrane. Residues 718–938 (TMSHEIRTPI…TFTITIPVEI (221 aa)) form the Histidine kinase domain. At histidine 721 the chain carries Phosphohistidine; by autocatalysis. In terms of domain architecture, Response regulatory spans 960 to 1074 (SILIADDHPT…VLKTHLSQLH (115 aa)). Residue aspartate 1009 is modified to 4-aspartylphosphate. Residues 1098 to 1197 (DLQLMQEILM…EIAVFCQKND (100 aa)) enclose the HPt domain. Residue histidine 1137 is modified to Phosphohistidine.

Post-translationally, activation requires a sequential transfer of a phosphate group from a His in the primary transmitter domain, to an Asp in the receiver domain and to a His in the secondary transmitter domain.

Its subcellular location is the cell inner membrane. It catalyses the reaction ATP + protein L-histidine = ADP + protein N-phospho-L-histidine.. Its function is as follows. Member of the two-component regulatory system EvgS/EvgA. Phosphorylates EvgA via a four-step phosphorelay in response to environmental signals. The protein is Sensor protein EvgS (evgS) of Escherichia coli (strain K12).